A 188-amino-acid polypeptide reads, in one-letter code: Elongation factor P-like protein (188 aa).

Belongs to the elongation factor P family.

The chain is Elongation factor P-like protein from Stenotrophomonas maltophilia (strain R551-3).